A 433-amino-acid polypeptide reads, in one-letter code: L-saccharopine oxidase (433 aa).

Positions 1-18 (MSRTIVIVGCGVFGLSTA) are cleaved as a signal peptide. N-linked (GlcNAc...) asparagine glycans are attached at residues Asn24, Asn119, Asn188, and Asn229.

Belongs to the MSOX/MTOX family. In terms of assembly, monomer. FAD is required as a cofactor.

The protein resides in the secreted. It localises to the cytoplasm. It is found in the nucleus. It catalyses the reaction L-saccharopine + O2 + H2O = (S)-2-amino-6-oxohexanoate + L-glutamate + H2O2. The chain is L-saccharopine oxidase from Schizosaccharomyces pombe (strain 972 / ATCC 24843) (Fission yeast).